Consider the following 507-residue polypeptide: Maturase K (507 aa).

This sequence belongs to the intron maturase 2 family. MatK subfamily.

It is found in the plastid. The protein resides in the chloroplast. In terms of biological role, usually encoded in the trnK tRNA gene intron. Probably assists in splicing its own and other chloroplast group II introns. The sequence is that of Maturase K from Umbellularia californica (California bay laurel).